We begin with the raw amino-acid sequence, 1385 residues long: DNA-directed RNA polymerase subunit beta (1385 aa).

It belongs to the RNA polymerase beta chain family. As to quaternary structure, the RNAP catalytic core consists of 2 alpha, 1 beta, 1 beta' and 1 omega subunit. When a sigma factor is associated with the core the holoenzyme is formed, which can initiate transcription.

The enzyme catalyses RNA(n) + a ribonucleoside 5'-triphosphate = RNA(n+1) + diphosphate. DNA-dependent RNA polymerase catalyzes the transcription of DNA into RNA using the four ribonucleoside triphosphates as substrates. The polypeptide is DNA-directed RNA polymerase subunit beta (Jannaschia sp. (strain CCS1)).